Reading from the N-terminus, the 86-residue chain is Phosphocarrier protein HPr (86 aa).

Residues 1-86 (MVKKEAIIKA…LAELIESFKE (86 aa)) form the HPr domain. The active-site Pros-phosphohistidine intermediate is histidine 15.

It belongs to the HPr family.

The protein localises to the cytoplasm. Functionally, general (non sugar-specific) component of the phosphoenolpyruvate-dependent sugar phosphotransferase system (sugar PTS). This major carbohydrate active-transport system catalyzes the phosphorylation of incoming sugar substrates concomitantly with their translocation across the cell membrane. The phosphoryl group from phosphoenolpyruvate (PEP) is transferred to the phosphoryl carrier protein HPr by enzyme I. Phospho-HPr then transfers it to the PTS EIIA domain. The polypeptide is Phosphocarrier protein HPr (ptsH) (Borreliella burgdorferi (strain ATCC 35210 / DSM 4680 / CIP 102532 / B31) (Borrelia burgdorferi)).